A 436-amino-acid polypeptide reads, in one-letter code: GTPase Obg (436 aa).

Residues Ser2–Leu160 enclose the Obg domain. Residues Ala161–Asp338 enclose the OBG-type G domain. Residues Gly167–Ser174, Phe192–Val196, Asp214–Gly217, Asn284–Asp287, and Ser319–Leu321 each bind GTP. The Mg(2+) site is built by Ser174 and Thr194. The OCT domain occupies Gly358–Asp436.

It belongs to the TRAFAC class OBG-HflX-like GTPase superfamily. OBG GTPase family. As to quaternary structure, monomer. Mg(2+) is required as a cofactor.

Its subcellular location is the cytoplasm. Its function is as follows. An essential GTPase which binds GTP, GDP and possibly (p)ppGpp with moderate affinity, with high nucleotide exchange rates and a fairly low GTP hydrolysis rate. Plays a role in control of the cell cycle, stress response, ribosome biogenesis and in those bacteria that undergo differentiation, in morphogenesis control. This is GTPase Obg from Streptococcus gordonii (strain Challis / ATCC 35105 / BCRC 15272 / CH1 / DL1 / V288).